The following is a 418-amino-acid chain: Putative ion-transport protein YfeO (418 aa).

12 consecutive transmembrane segments (helical) span residues 10 to 30 (LLLSLPAVAIGIASSLILIVV), 54 to 74 (DSPFWIIAILTLTGIAVGLVI), 99 to 119 (ALPGLIVALILGLAGGVSLGP), 120 to 140 (EHPIMTVNIALAVAIGARLLP), 149 to 169 (ILASAGTIGALFGTPVAAALI), 186 to 206 (LFAPLMAAAAGALTTGLFFHP), 223 to 243 (ILSGAIVAAIAIAAGMVAVWC), 258 to 278 (VLMLGVGGFILGILGVIAGPV), 300 to 320 (DYFLLAVIKLAALVVAAASGF), 322 to 342 (GGRIFPAVFVGVALGLMLHEH), 343 to 363 (VPAVPAAITVSCAILGIVLVV), and 386 to 406 (LLCIVMLPAWLLLAGKPIMMV).

The protein belongs to the chloride channel (TC 2.A.49) family.

The protein resides in the cell membrane. This Escherichia fergusonii (strain ATCC 35469 / DSM 13698 / CCUG 18766 / IAM 14443 / JCM 21226 / LMG 7866 / NBRC 102419 / NCTC 12128 / CDC 0568-73) protein is Putative ion-transport protein YfeO.